The chain runs to 583 residues: Proteasome-associated ATPase (583 aa).

The segment covering 1-19 (METPNQDSGRTPTEQSAAN) has biased composition (polar residues). A disordered region spans residues 1-22 (METPNQDSGRTPTEQSAANDLS). Positions 24 to 75 (ADRQVNILRDKLRHIDRQLAAATQNNTKLVSMLETAKAEILRLKNALDQEGQ) form a coiled coil. Residue 271–276 (GCGKTL) participates in ATP binding. Residues 582 to 583 (YL) form a docks into pockets in the proteasome alpha-ring region.

Belongs to the AAA ATPase family. In terms of assembly, homohexamer. Assembles into a hexameric ring structure that caps the 20S proteasome core. Strongly interacts with the prokaryotic ubiquitin-like protein Pup through a hydrophobic interface; the interacting region of ARC lies in its N-terminal coiled-coil domain. There is one Pup binding site per ARC hexamer ring. Upon ATP-binding, the C-terminus of ARC interacts with the alpha-rings of the proteasome core, possibly by binding to the intersubunit pockets.

It participates in protein degradation; proteasomal Pup-dependent pathway. Its function is as follows. ATPase which is responsible for recognizing, binding, unfolding and translocation of pupylated proteins into the bacterial 20S proteasome core particle. May be essential for opening the gate of the 20S proteasome via an interaction with its C-terminus, thereby allowing substrate entry and access to the site of proteolysis. Thus, the C-termini of the proteasomal ATPase may function like a 'key in a lock' to induce gate opening and therefore regulate proteolysis. This is Proteasome-associated ATPase from Pseudarthrobacter chlorophenolicus (strain ATCC 700700 / DSM 12829 / CIP 107037 / JCM 12360 / KCTC 9906 / NCIMB 13794 / A6) (Arthrobacter chlorophenolicus).